The sequence spans 357 residues: Glutamine synthetase root isozyme B (357 aa).

The GS beta-grasp domain occupies 19-99; the sequence is IIAEYIWVGG…VICDVYTPAG (81 aa). The GS catalytic domain occupies 106–357; the sequence is KRYNAAKIFS…AETTILWKKS (252 aa).

This sequence belongs to the glutamine synthetase family. Homooctamer.

The protein localises to the cytoplasm. The catalysed reaction is L-glutamate + NH4(+) + ATP = L-glutamine + ADP + phosphate + H(+). In Pisum sativum (Garden pea), this protein is Glutamine synthetase root isozyme B (GS3B).